The primary structure comprises 179 residues: Dynein light chain Tctex-type 5 (179 aa).

The protein belongs to the dynein light chain Tctex-type family. In terms of assembly, interacts with ZMYND10.

The polypeptide is Dynein light chain Tctex-type 5 (DYNLT5) (Homo sapiens (Human)).